The chain runs to 202 residues: Helix-loop-helix protein 10 (202 aa).

2 disordered regions span residues 1 to 26 and 83 to 112; these read MESS…NSEL and QNKS…GKID. Polar residues predominate over residues 17–26; the sequence is STGNHGNSEL. Positions 121 to 134 are basic motif; it reads TRRYEANARERNRV. Residues 121–172 form the bHLH domain; it reads TRRYEANARERNRVQQLSKMFDQLRVCLPIEDDAKISKLATLKVASSYIGYL. The helix-loop-helix motif stretch occupies residues 135-172; it reads QQLSKMFDQLRVCLPIEDDAKISKLATLKVASSYIGYL.

Heterodimer with hlh-2. Expressed in intestine, neurons in head, body and tail, and in body hypodermis, and vulva. Expressed in neurons in the male-specific genital sensilla (simple sense organs) known as rays.

The protein localises to the nucleus. It localises to the cytoplasm. In terms of biological role, probable transcription factor which binds the E box motif 5'-CA[TC][AG]TG-3'. The sequence is that of Helix-loop-helix protein 10 from Caenorhabditis elegans.